A 427-amino-acid polypeptide reads, in one-letter code: Methylenetetrahydrofolate--tRNA-(uracil-5-)-methyltransferase TrmFO (427 aa).

6–11 (GAGLAG) provides a ligand contact to FAD.

Belongs to the MnmG family. TrmFO subfamily. FAD serves as cofactor.

It is found in the cytoplasm. The enzyme catalyses uridine(54) in tRNA + (6R)-5,10-methylene-5,6,7,8-tetrahydrofolate + NADH + H(+) = 5-methyluridine(54) in tRNA + (6S)-5,6,7,8-tetrahydrofolate + NAD(+). It carries out the reaction uridine(54) in tRNA + (6R)-5,10-methylene-5,6,7,8-tetrahydrofolate + NADPH + H(+) = 5-methyluridine(54) in tRNA + (6S)-5,6,7,8-tetrahydrofolate + NADP(+). Its function is as follows. Catalyzes the folate-dependent formation of 5-methyl-uridine at position 54 (M-5-U54) in all tRNAs. The polypeptide is Methylenetetrahydrofolate--tRNA-(uracil-5-)-methyltransferase TrmFO (Acholeplasma laidlawii (strain PG-8A)).